Consider the following 129-residue polypeptide: L-ectoine synthase (129 aa).

It belongs to the ectoine synthase family.

The enzyme catalyses (2S)-4-acetamido-2-aminobutanoate = L-ectoine + H2O. The protein operates within amine and polyamine biosynthesis; ectoine biosynthesis; L-ectoine from L-aspartate 4-semialdehyde: step 3/3. Its function is as follows. Catalyzes the circularization of gamma-N-acetyl-alpha,gamma-diaminobutyric acid (ADABA) to ectoine (1,4,5,6-tetrahydro-2-methyl-4-pyrimidine carboxylic acid), which is an excellent osmoprotectant. The sequence is that of L-ectoine synthase from Marinomonas sp. (strain MWYL1).